Reading from the N-terminus, the 862-residue chain is Eukaryotic translation initiation factor 3 subunit C (862 aa).

A compositionally biased stretch (gly residues) spans 1–10 (MSRFFYGGGS). Positions 1–81 (MSRFFYGGGS…DEEKTTVVKS (81 aa)) are disordered. Acidic residues predominate over residues 16-52 (SSDEEELYERDEEEQSEEEESSEEEETSEEGSDDEEG). Residues 601–775 (FHMHINLELL…GAIVFRKGVE (175 aa)) enclose the PCI domain. The tract at residues 814–862 (RDQGAGARGGRGGGRGGHARGGARFPGQQGRRPGGQQFGGGALGGAIKA) is disordered. The span at 819–833 (GARGGRGGGRGGHAR) shows a compositional bias: gly residues. Over residues 835 to 844 (GARFPGQQGR) the composition is skewed to low complexity. Positions 845 to 862 (RPGGQQFGGGALGGAIKA) are enriched in gly residues.

It belongs to the eIF-3 subunit C family. Component of the eukaryotic translation initiation factor 3 (eIF-3) complex.

The protein resides in the cytoplasm. Its function is as follows. Component of the eukaryotic translation initiation factor 3 (eIF-3) complex, which is involved in protein synthesis of a specialized repertoire of mRNAs and, together with other initiation factors, stimulates binding of mRNA and methionyl-tRNAi to the 40S ribosome. The eIF-3 complex specifically targets and initiates translation of a subset of mRNAs involved in cell proliferation. In Aspergillus clavatus (strain ATCC 1007 / CBS 513.65 / DSM 816 / NCTC 3887 / NRRL 1 / QM 1276 / 107), this protein is Eukaryotic translation initiation factor 3 subunit C (nip1).